Reading from the N-terminus, the 270-residue chain is Zinc finger protein ZAT2 (270 aa).

Composition is skewed to polar residues over residues Met1–Asn28 and Leu36–Pro48. The segment at Met1–Ala64 is disordered. The C2H2-type 1 zinc-finger motif lies at Arg65 to His87. Residues Ile95–Ser119 are disordered. A compositionally biased stretch (low complexity) spans Asn106 to Ser115. 2 C2H2-type zinc fingers span residues Phe148–His170 and His211–His233.

As to quaternary structure, interacts (via the EAR motif) with TPL. As to expression, expressed exclusively in pollen.

Its subcellular location is the nucleus. Its function is as follows. Mediates the regulation of male germ cell division by DUO1. The chain is Zinc finger protein ZAT2 from Arabidopsis thaliana (Mouse-ear cress).